Reading from the N-terminus, the 240-residue chain is Phosphoribosylaminoimidazole-succinocarboxamide synthase (240 aa).

Belongs to the SAICAR synthetase family.

It catalyses the reaction 5-amino-1-(5-phospho-D-ribosyl)imidazole-4-carboxylate + L-aspartate + ATP = (2S)-2-[5-amino-1-(5-phospho-beta-D-ribosyl)imidazole-4-carboxamido]succinate + ADP + phosphate + 2 H(+). Its pathway is purine metabolism; IMP biosynthesis via de novo pathway; 5-amino-1-(5-phospho-D-ribosyl)imidazole-4-carboxamide from 5-amino-1-(5-phospho-D-ribosyl)imidazole-4-carboxylate: step 1/2. This chain is Phosphoribosylaminoimidazole-succinocarboxamide synthase, found in Wolbachia pipientis wMel.